The primary structure comprises 131 residues: Sec-independent protein translocase protein TatB (131 aa).

A helical membrane pass occupies residues 2–22 (LGSLSWEHMLVLVVVGLVVLG). The interval 96–131 (AFDRPVNGAAAQPPPAPAPPPEPHRSGQTPFDADAT) is disordered. Residues 107-116 (QPPPAPAPPP) show a composition bias toward pro residues.

Belongs to the TatB family. The Tat system comprises two distinct complexes: a TatABC complex, containing multiple copies of TatA, TatB and TatC subunits, and a separate TatA complex, containing only TatA subunits. Substrates initially bind to the TatABC complex, which probably triggers association of the separate TatA complex to form the active translocon.

Its subcellular location is the cell membrane. Functionally, part of the twin-arginine translocation (Tat) system that transports large folded proteins containing a characteristic twin-arginine motif in their signal peptide across membranes. Together with TatC, TatB is part of a receptor directly interacting with Tat signal peptides. TatB may form an oligomeric binding site that transiently accommodates folded Tat precursor proteins before their translocation. The polypeptide is Sec-independent protein translocase protein TatB (Mycolicibacterium paratuberculosis (strain ATCC BAA-968 / K-10) (Mycobacterium paratuberculosis)).